A 579-amino-acid chain; its full sequence is Probable N-acetylgalactosaminyltransferase 9 (579 aa).

At 1–12 (MLRYIIPRKKGT) the chain is on the cytoplasmic side. A helical; Signal-anchor for type II membrane protein membrane pass occupies residues 13-30 (FVIAAFLTVAFFCIVAYH). Residues 31 to 579 (RNDRRRTKFQ…KWNFIDPAKA (549 aa)) are Lumenal-facing. An N-linked (GlcNAc...) asparagine glycan is attached at Asn-67. Intrachain disulfides connect Cys-123-Cys-356, Cys-347-Cys-427, Cys-464-Cys-483, Cys-507-Cys-520, and Cys-545-Cys-562. The segment at 133-243 (LPKTSVIIIF…HGWLEPIVQR (111 aa)) is catalytic subdomain A. Residues Asp-174 and Arg-204 each coordinate substrate. Asp-227 serves as a coordination point for Mn(2+). Residue Ser-228 participates in substrate binding. Residue His-229 participates in Mn(2+) binding. A catalytic subdomain B region spans residues 302 to 364 (YIRSPTMAGG…PCSHVGHIFR (63 aa)). Trp-333 contributes to the substrate binding site. His-361 is a binding site for Mn(2+). Residues Arg-364, His-367, and Tyr-369 each coordinate substrate. Residue Asn-370 is glycosylated (N-linked (GlcNAc...) asparagine). One can recognise a Ricin B-type lectin domain in the interval 450–574 (AYGALHTVVS…KDEHQKWNFI (125 aa)).

The protein belongs to the glycosyltransferase 2 family. GalNAc-T subfamily. Mn(2+) is required as a cofactor.

Its subcellular location is the golgi apparatus membrane. The protein operates within protein modification; protein glycosylation. Its function is as follows. Probable glycopeptide transferase involved in O-linked oligosaccharide biosynthesis. Glycopeptide transferases catalyze the transfer of an N-acetyl-D-galactosamine residue to an already glycosylated peptide. In contrast to other members of the family, it does not act as a peptide transferase that transfers GalNAc onto serine or threonine residue on peptides that have been tested. Some peptide transferase activity is however not excluded, considering that its appropriate peptide substrate may remain unidentified. This chain is Probable N-acetylgalactosaminyltransferase 9 (gly-9), found in Caenorhabditis elegans.